The chain runs to 410 residues: Multidrug resistance protein MdtM (410 aa).

Residues 1-11 are Cytoplasmic-facing; the sequence is MPRFFTRHAAT. Residues 12–32 form a helical membrane-spanning segment; that stretch reads LFFPMALILYDFAAYLSTDLI. Topologically, residues 33–48 are periplasmic; that stretch reads QPGIINVVRDFNADVS. The chain crosses the membrane as a helical span at residues 49–69; it reads LAPAAVSLYLAGGMALQWLLG. The Cytoplasmic segment spans residues 70–78; sequence PLSDRIGRR. The chain crosses the membrane as a helical span at residues 79-99; that stretch reads PVLITGALIFTLACAATMFTT. At 100–103 the chain is on the periplasmic side; that stretch reads SMTQ. A helical transmembrane segment spans residues 104 to 124; that stretch reads FLIARAIQGTSICFIATVGYV. Over 125–140 the chain is Cytoplasmic; it reads TVQEAFGQTKGIKLMA. A helical membrane pass occupies residues 141-161; it reads IITSIVLIAPIIGPLSGAALM. Residues 162-167 lie on the Periplasmic side of the membrane; the sequence is HFMHWK. The chain crosses the membrane as a helical span at residues 168–188; the sequence is VLFAIIAVMGFISFVGLLLAM. At 189-216 the chain is on the cytoplasmic side; sequence PETVKRGAVPFSAKSVLRDFRNVFCNRL. The chain crosses the membrane as a helical span at residues 217–237; that stretch reads FLFGAATISLSYIPMMSWVAV. Residues 238–251 lie on the Periplasmic side of the membrane; it reads SPVILIDAGSLTTS. Residues 252–272 traverse the membrane as a helical segment; it reads QFAWTQVPVFGAVIVANAIVA. Residues 273 to 282 are Cytoplasmic-facing; sequence RFVKDPTEPR. A helical membrane pass occupies residues 283–303; the sequence is FIWRAVPIQLVGLSLLIVGNL. The Periplasmic segment spans residues 304 to 307; the sequence is LSPH. A helical membrane pass occupies residues 308-328; it reads VWLWSVLGTSLYAFGIGLIFP. Residues 329-348 are Cytoplasmic-facing; the sequence is TLFRFTLFSNKLPKGTVSAS. Residues 349 to 369 traverse the membrane as a helical segment; the sequence is LNMVILMVMSVSVEIGRWLWF. Residues 370–373 lie on the Periplasmic side of the membrane; sequence NGGR. A helical membrane pass occupies residues 374-394; sequence LPFHLLAVVAGVIVVFTLAGL. Residues 395–410 lie on the Cytoplasmic side of the membrane; sequence LNRVRQHQAAELVEEQ.

The protein belongs to the major facilitator superfamily. As to quaternary structure, monomer.

The protein localises to the cell inner membrane. The enzyme catalyses Na(+)(in) + 2 H(+)(out) = Na(+)(out) + 2 H(+)(in). It carries out the reaction K(+)(in) + H(+)(out) = K(+)(out) + H(+)(in). Efflux is inhibited by the ionophore carbonyl cyanide 3-chlorophenylhydrazone (CCCP). Its function is as follows. Proton-dependent efflux pump. Confers resistance to a broad spectrum of chemically unrelated substrates. Overexpression confers resistance to acriflavine, chloramphenicol, norfloxacin, ethidium bromide and tetraphenylphosphonium bromide (TPP). Can also export a broad range of quaternary ammonium compounds (QACs) and contribute to the intrinsic resistance of E.coli to these antimicrobial compounds. In addition to its role in multidrug resistance, MdtM likely plays a physiological role in alkaline pH homeostasis and in resistance to bile salts. May function in alkaline pH homeostasis when millimolar concentrations of sodium or potassium are present in the growth medium. When overexpressed, can confer a tolerance to alkaline pH values up to 9.75. Probably acts as a low-affinity antiporter that catalyzes the exchange of internal Na(+) and K(+) cations for extracellular protons to maintain a stable internal pH, acid relative to outside, during exposure to alkaline environments. Can also catalyze Rb(+)/H(+) and Li(+)/H(+) antiport, but not Ca(2+)/H(+) exchange. The exact stoichiometry of antiport is unknown. Finally, it could contribute to bile salt resistance by catalyzing the transport of bile salts out of the cell cytoplasm. Mediates a bile salt/H(+) exchange driven by the electrochemical gradient. Binds to cholate and deoxycholate with micromolar affinity and catalyzes both cholate/H(+) and deoxycholate/H(+) exchange reactions. The polypeptide is Multidrug resistance protein MdtM (Escherichia coli (strain K12)).